Consider the following 273-residue polypeptide: 2-dehydro-3-deoxyphosphooctonate aldolase (273 aa).

This sequence belongs to the KdsA family.

The protein localises to the cytoplasm. It carries out the reaction D-arabinose 5-phosphate + phosphoenolpyruvate + H2O = 3-deoxy-alpha-D-manno-2-octulosonate-8-phosphate + phosphate. It functions in the pathway carbohydrate biosynthesis; 3-deoxy-D-manno-octulosonate biosynthesis; 3-deoxy-D-manno-octulosonate from D-ribulose 5-phosphate: step 2/3. Its pathway is bacterial outer membrane biogenesis; lipopolysaccharide biosynthesis. This Cyanothece sp. (strain PCC 7425 / ATCC 29141) protein is 2-dehydro-3-deoxyphosphooctonate aldolase.